Here is a 223-residue protein sequence, read N- to C-terminus: HTH-type transcriptional dual regulator CecR (223 aa).

Residues 11-70 (EQAKKQLIAAALAQFGEYGMNATTREIAAQAGQNIAAITYYFGSKEDLYLACAQWIADFI) form the HTH tetR-type domain. A DNA-binding region (H-T-H motif) is located at residues 33 to 52 (TTREIAAQAGQNIAAITYYF).

It localises to the cytoplasm. Functionally, regulates transcription of the cecR-ybhGFSR operon and the rhlE gene, which altogether are involved in the control of sensitivity to cefoperazone and chloramphenicol. Represses the cecR-ybhGFSR operon and activates the rhlE operon. Acts by binding to a palindromic sequence within the intergenic spacer located between these two divergently transcribed operons. The polypeptide is HTH-type transcriptional dual regulator CecR (Shigella flexneri).